A 163-amino-acid chain; its full sequence is NADH-quinone oxidoreductase subunit I (163 aa).

4Fe-4S ferredoxin-type domains are found at residues L53–G83 and V94–N123. Residues C63, C66, C69, C73, C103, C106, C109, and C113 each contribute to the [4Fe-4S] cluster site.

It belongs to the complex I 23 kDa subunit family. In terms of assembly, NDH-1 is composed of 14 different subunits. Subunits NuoA, H, J, K, L, M, N constitute the membrane sector of the complex. Requires [4Fe-4S] cluster as cofactor.

It localises to the cell inner membrane. The enzyme catalyses a quinone + NADH + 5 H(+)(in) = a quinol + NAD(+) + 4 H(+)(out). Functionally, NDH-1 shuttles electrons from NADH, via FMN and iron-sulfur (Fe-S) centers, to quinones in the respiratory chain. The immediate electron acceptor for the enzyme in this species is believed to be ubiquinone. Couples the redox reaction to proton translocation (for every two electrons transferred, four hydrogen ions are translocated across the cytoplasmic membrane), and thus conserves the redox energy in a proton gradient. The protein is NADH-quinone oxidoreductase subunit I of Bartonella quintana (strain Toulouse) (Rochalimaea quintana).